The primary structure comprises 368 residues: DNA replication and repair protein RecF (368 aa).

An ATP-binding site is contributed by 30 to 37 (GRNGSGKT).

The protein belongs to the RecF family.

It is found in the cytoplasm. Functionally, the RecF protein is involved in DNA metabolism; it is required for DNA replication and normal SOS inducibility. RecF binds preferentially to single-stranded, linear DNA. It also seems to bind ATP. The polypeptide is DNA replication and repair protein RecF (Chlorobaculum tepidum (strain ATCC 49652 / DSM 12025 / NBRC 103806 / TLS) (Chlorobium tepidum)).